The following is a 396-amino-acid chain: Elongation factor Tu (396 aa).

One can recognise a tr-type G domain in the interval 10–205 (KPHVNIGTIG…AVDESIPDPV (196 aa)). Residues 19–26 (GHVDHGKT) are G1. A GTP-binding site is contributed by 19–26 (GHVDHGKT). Thr-26 serves as a coordination point for Mg(2+). Positions 62–66 (GITIN) are G2. A G3 region spans residues 83-86 (DAPG). Residues 83 to 87 (DAPGH) and 138 to 141 (NKAD) contribute to the GTP site. The segment at 138–141 (NKAD) is G4. Residues 175 to 177 (SAL) form a G5 region.

The protein belongs to the TRAFAC class translation factor GTPase superfamily. Classic translation factor GTPase family. EF-Tu/EF-1A subfamily. As to quaternary structure, monomer.

The protein resides in the cytoplasm. The enzyme catalyses GTP + H2O = GDP + phosphate + H(+). Functionally, GTP hydrolase that promotes the GTP-dependent binding of aminoacyl-tRNA to the A-site of ribosomes during protein biosynthesis. In Rhodococcus erythropolis (strain PR4 / NBRC 100887), this protein is Elongation factor Tu.